Here is a 453-residue protein sequence, read N- to C-terminus: Keratin, type I cytoskeletal 15 (453 aa).

The head stretch occupies residues 1–102 (MATTLLQTSS…GGDGGLLSGN (102 aa)). Ser16, Ser17, Ser34, Ser48, and Ser56 each carry phosphoserine. The interval 103–138 (EKITMQNLNDRLASYLEKVRALEEANADLEVKIRDW) is coil 1A. The region spanning 103-415 (EKITMQNLND…SLLEGQDARM (313 aa)) is the IF rod domain. Residues 139 to 157 (YQRQSPTSPERDYSPYFKT) are linker 1. Residues 158 to 249 (TDELRDKILA…KNHEEEMKEF (92 aa)) are coil 1B. The linker 12 stretch occupies residues 250-269 (SNQLAGQVNVEMDAAPGVDL). Residues 270–411 (TRVLSEMREQ…ATYHSLLEGQ (142 aa)) form a coil 2 region. A Glycyl lysine isopeptide (Lys-Gly) (interchain with G-Cter in SUMO2) cross-link involves residue Lys298. Thr299 and Thr321 each carry phosphothreonine. A tail region spans residues 412–453 (DARMAGIGTGEASLGGGGGGKVRINVEESVDGKVVSSRKREI). Lys444 is covalently cross-linked (Glycyl lysine isopeptide (Lys-Gly) (interchain with G-Cter in SUMO1); alternate). A Glycyl lysine isopeptide (Lys-Gly) (interchain with G-Cter in SUMO2); alternate cross-link involves residue Lys444.

Belongs to the intermediate filament family. As to quaternary structure, heterotetramer of two type I and two type II keratins. Interacts with NOD2. In terms of tissue distribution, expressed in the basal cell layers of several stratified epithelia including esophagus, tongue, stomach, epidermis and hair follicle. In the hair follicle, expression is detected mainly in the basal layer of the outer root sheath (ORS), except just above the follicle bulb where it occurs throughout its thickness. Low expression levels are seen in the single layer of ORS cells around the base of the follicle which increases in the palisade-like cells of the bulb. Also expressed in the basal cells of the sebaceous glands, and expression in the epidermis occurs in a punctate pattern.

The polypeptide is Keratin, type I cytoskeletal 15 (Ovis aries (Sheep)).